Reading from the N-terminus, the 205-residue chain is Protein-L-isoaspartate O-methyltransferase (205 aa).

The active site involves serine 56.

Belongs to the methyltransferase superfamily. L-isoaspartyl/D-aspartyl protein methyltransferase family.

It is found in the cytoplasm. It catalyses the reaction [protein]-L-isoaspartate + S-adenosyl-L-methionine = [protein]-L-isoaspartate alpha-methyl ester + S-adenosyl-L-homocysteine. In terms of biological role, catalyzes the methyl esterification of L-isoaspartyl residues in peptides and proteins that result from spontaneous decomposition of normal L-aspartyl and L-asparaginyl residues. It plays a role in the repair and/or degradation of damaged proteins. This chain is Protein-L-isoaspartate O-methyltransferase, found in Pyrobaculum arsenaticum (strain DSM 13514 / JCM 11321 / PZ6).